The primary structure comprises 179 residues: ATP synthase subunit delta (179 aa).

Belongs to the ATPase delta chain family. In terms of assembly, F-type ATPases have 2 components, F(1) - the catalytic core - and F(0) - the membrane proton channel. F(1) has five subunits: alpha(3), beta(3), gamma(1), delta(1), epsilon(1). F(0) has three main subunits: a(1), b(2) and c(10-14). The alpha and beta chains form an alternating ring which encloses part of the gamma chain. F(1) is attached to F(0) by a central stalk formed by the gamma and epsilon chains, while a peripheral stalk is formed by the delta and b chains.

It is found in the cell inner membrane. Functionally, f(1)F(0) ATP synthase produces ATP from ADP in the presence of a proton or sodium gradient. F-type ATPases consist of two structural domains, F(1) containing the extramembraneous catalytic core and F(0) containing the membrane proton channel, linked together by a central stalk and a peripheral stalk. During catalysis, ATP synthesis in the catalytic domain of F(1) is coupled via a rotary mechanism of the central stalk subunits to proton translocation. In terms of biological role, this protein is part of the stalk that links CF(0) to CF(1). It either transmits conformational changes from CF(0) to CF(1) or is implicated in proton conduction. The protein is ATP synthase subunit delta of Burkholderia orbicola (strain MC0-3).